A 117-amino-acid polypeptide reads, in one-letter code: Cliotide T9 (117 aa).

A signal peptide spans 1 to 25 (MAYVRLACLAVIFFFAASVMFTVEA). The cyclopeptide (Gly-Asn) cross-link spans 26 to 55 (GIPCGESCVFIPCLTTVVGCSCKNKVCYNN). Disulfide bonds link cysteine 29-cysteine 45, cysteine 33-cysteine 47, and cysteine 38-cysteine 52. The propeptide at 56–117 (HVIAAEANSI…YLLKDFLKMP (62 aa)) is removed in mature form.

Contains 3 disulfide bonds. In terms of processing, this is a cyclic peptide. In terms of tissue distribution, expressed in seed but not in root, nodule, flower, stem, shoot, leaf and pod (at protein level).

In terms of biological role, probably participates in a plant defense mechanism. The chain is Cliotide T9 from Clitoria ternatea (Butterfly pea).